A 537-amino-acid chain; its full sequence is Chaperonin GroEL 1 (537 aa).

ATP contacts are provided by residues 29–32 (TLGP), 86–90 (DGTTT), Gly-413, and Asp-494.

This sequence belongs to the chaperonin (HSP60) family. Forms a cylinder of 14 subunits composed of two heptameric rings stacked back-to-back. Interacts with the co-chaperonin GroES.

Its subcellular location is the cytoplasm. It carries out the reaction ATP + H2O + a folded polypeptide = ADP + phosphate + an unfolded polypeptide.. Functionally, together with its co-chaperonin GroES, plays an essential role in assisting protein folding. The GroEL-GroES system forms a nano-cage that allows encapsulation of the non-native substrate proteins and provides a physical environment optimized to promote and accelerate protein folding. The polypeptide is Chaperonin GroEL 1 (Mycobacterium leprae (strain TN)).